The sequence spans 86 residues: Translation initiation factor IF-1 2 (86 aa).

The region spanning 1 to 72 (MAKEELLEME…TKARISFRHK (72 aa)) is the S1-like domain.

Belongs to the IF-1 family. As to quaternary structure, component of the 30S ribosomal translation pre-initiation complex which assembles on the 30S ribosome in the order IF-2 and IF-3, IF-1 and N-formylmethionyl-tRNA(fMet); mRNA recruitment can occur at any time during PIC assembly.

The protein resides in the cytoplasm. One of the essential components for the initiation of protein synthesis. Stabilizes the binding of IF-2 and IF-3 on the 30S subunit to which N-formylmethionyl-tRNA(fMet) subsequently binds. Helps modulate mRNA selection, yielding the 30S pre-initiation complex (PIC). Upon addition of the 50S ribosomal subunit IF-1, IF-2 and IF-3 are released leaving the mature 70S translation initiation complex. The protein is Translation initiation factor IF-1 2 of Aromatoleum aromaticum (strain DSM 19018 / LMG 30748 / EbN1) (Azoarcus sp. (strain EbN1)).